An 89-amino-acid chain; its full sequence is UPF0297 protein SMU_2079c (89 aa).

This sequence belongs to the UPF0297 family.

This Streptococcus mutans serotype c (strain ATCC 700610 / UA159) protein is UPF0297 protein SMU_2079c.